The following is a 355-amino-acid chain: C-X-C chemokine receptor type 1 (355 aa).

The Extracellular segment spans residues methionine 1 to glutamine 40. Residues asparagine 7 and asparagine 21 are each glycosylated (N-linked (GlcNAc...) asparagine). Residues threonine 41–leucine 67 traverse the membrane as a helical segment. Over valine 68–arginine 73 the chain is Cytoplasmic. Residues serine 74–leucine 92 form a helical membrane-spanning segment. At phenylalanine 93–leucine 114 the chain is on the extracellular side. A helical transmembrane segment spans residues cysteine 115 to valine 138. Residues cysteine 115 and cysteine 192 are joined by a disulfide bond. Topologically, residues aspartate 139–lysine 159 are cytoplasmic. Residues phenylalanine 160 to serine 184 form a helical membrane-spanning segment. Over proline 185–arginine 204 the chain is Extracellular. The chain crosses the membrane as a helical span at residues methionine 205–arginine 232. The Cytoplasmic portion of the chain corresponds to threonine 233 to arginine 247. The chain crosses the membrane as a helical span at residues valine 248–aspartate 270. Residues threonine 271–arginine 290 are Extracellular-facing. The helical transmembrane segment at alanine 291–isoleucine 313 threads the bilayer. At glycine 314 to leucine 355 the chain is on the cytoplasmic side.

It belongs to the G-protein coupled receptor 1 family. As to quaternary structure, interacts with IL8. Interacts with GNAI2. As to expression, neutrophils.

It is found in the cell membrane. In terms of biological role, receptor to interleukin-8, which is a powerful neutrophils chemotactic factor. Binding of IL-8 to the receptor causes activation of neutrophils. This response is mediated via a G-protein that activates a phosphatidylinositol-calcium second messenger system. The chain is C-X-C chemokine receptor type 1 (CXCR1) from Oryctolagus cuniculus (Rabbit).